Consider the following 344-residue polypeptide: Phosphate acyltransferase (344 aa).

This sequence belongs to the PlsX family. As to quaternary structure, homodimer. Probably interacts with PlsY.

The protein resides in the cytoplasm. It carries out the reaction a fatty acyl-[ACP] + phosphate = an acyl phosphate + holo-[ACP]. It participates in lipid metabolism; phospholipid metabolism. In terms of biological role, catalyzes the reversible formation of acyl-phosphate (acyl-PO(4)) from acyl-[acyl-carrier-protein] (acyl-ACP). This enzyme utilizes acyl-ACP as fatty acyl donor, but not acyl-CoA. This chain is Phosphate acyltransferase, found in Acaryochloris marina (strain MBIC 11017).